Consider the following 227-residue polypeptide: ATP phosphoribosyltransferase (227 aa).

This sequence belongs to the ATP phosphoribosyltransferase family. Short subfamily. In terms of assembly, heteromultimer composed of HisG and HisZ subunits.

Its subcellular location is the cytoplasm. The enzyme catalyses 1-(5-phospho-beta-D-ribosyl)-ATP + diphosphate = 5-phospho-alpha-D-ribose 1-diphosphate + ATP. It participates in amino-acid biosynthesis; L-histidine biosynthesis; L-histidine from 5-phospho-alpha-D-ribose 1-diphosphate: step 1/9. In terms of biological role, catalyzes the condensation of ATP and 5-phosphoribose 1-diphosphate to form N'-(5'-phosphoribosyl)-ATP (PR-ATP). Has a crucial role in the pathway because the rate of histidine biosynthesis seems to be controlled primarily by regulation of HisG enzymatic activity. The protein is ATP phosphoribosyltransferase of Bordetella avium (strain 197N).